The following is a 347-amino-acid chain: Dihydroorotase (347 aa).

Residues H14 and H16 each coordinate Zn(2+). Substrate-binding positions include 16 to 18 and N42; that span reads HLR. K100, H137, and H175 together coordinate Zn(2+). Position 100 is an N6-carboxylysine (K100). Position 137 (H137) interacts with substrate. L220 provides a ligand contact to substrate. D248 is a Zn(2+) binding site. Residue D248 is part of the active site. The substrate site is built by H252 and A264.

It belongs to the metallo-dependent hydrolases superfamily. DHOase family. Class II DHOase subfamily. Homodimer. Requires Zn(2+) as cofactor.

It carries out the reaction (S)-dihydroorotate + H2O = N-carbamoyl-L-aspartate + H(+). It functions in the pathway pyrimidine metabolism; UMP biosynthesis via de novo pathway; (S)-dihydroorotate from bicarbonate: step 3/3. In terms of biological role, catalyzes the reversible cyclization of carbamoyl aspartate to dihydroorotate. The polypeptide is Dihydroorotase (Stutzerimonas stutzeri (strain A1501) (Pseudomonas stutzeri)).